Here is a 442-residue protein sequence, read N- to C-terminus: MFGYSMVQMVRANAHKLDWPLRETVLQLYKPFKWTPCFLHKFFETKLQNRKKMSVIIEFEEGCHETGFQMAGEVLQKEKRSKLKSRFNKINCCSAEVTPSALHSLLSECSNIRKVYLNREVKALLDTATEASHAKEVVRNGQTLTGKGVTVAVVDTGIYPHPDLEGRIIGFADMVNQKTEPYDDNGHGTHCAGDVASSGASSSGQYRGPAPEANLIGVKVLNKQGSGTLADIIEGVEWCIQYNEDNPDEPIDIMSMSLGGDALRYDHEQEDPLVRAVEEAWSAGIVVCVAAGNSGPDSQTIASPGVSEKVITVGALDDNNTASSDDDTVASFSSRGPTVYGKEKPDILAPGVNIISLRSPNSYIDKLQKSSRVGSQYFTMSGTSMATPICAGIAALILQQNPDLTPDEVKELLKNGTDKWKDEDPNIYGAGAVNAENSVPGQ.

A Peptidase S8 domain is found at 122–439 (KALLDTATEA…AGAVNAENSV (318 aa)). Residues Asp155 and His187 each act as charge relay system in the active site. Positions 318–337 (DNNTASSDDDTVASFSSRGP) are disordered. The Charge relay system role is filled by Ser384. The disordered stretch occupies residues 423-442 (EDPNIYGAGAVNAENSVPGQ).

The protein belongs to the peptidase S8 family.

Its subcellular location is the cytoplasm. Its activity is regulated as follows. Is completely inhibited by phenylmethanesulphonylfluoride (PMSF) in vitro. Its function is as follows. Displays serine protease activity. Seems to have a broad substrate specificity. The chain is Serine protease AprX (aprX) from Bacillus subtilis (strain 168).